A 338-amino-acid polypeptide reads, in one-letter code: Sporulation-specific protein 4 (338 aa).

The interval 14–37 is disordered; sequence QEENKNFLHKNTNEPNEMEQSQTQ. Residues 22 to 37 show a composition bias toward polar residues; it reads HKNTNEPNEMEQSQTQ.

Not essential for sporulation. Might be a component of the cell wall. The polypeptide is Sporulation-specific protein 4 (SPS4) (Saccharomyces cerevisiae (strain ATCC 204508 / S288c) (Baker's yeast)).